The following is a 1030-amino-acid chain: MKSLYTPTDYYMIRVPLVHQDLKNENSQDIDQLLHDLCNDSLFREQILVSSRTLYETIHTFLQAPDKLKGKKKRNFQQAILKYATRRATRTTPFGLFSSVGIGSFSDKNHLSFNQHSFYKKARVDLEWLYQLIRKLENEYTDRLSFTLNSACYIKGDRAYLLYSTDGKSEEVSVRATSVFYLINELCGESAAYQDIIRCLIDNYPNTPINKINQYVADLIDKEFLISNLRPPMTVSDQFQYLIDQAESRHIPNELIQACKDIQYQIDAYNRITIGEGEHQYLNLIETMNKLIKASSPLQVDAGLADSSIQLDNETSLAISELASMFTYMASPSANTLDHLEKYHNVFLERYGYEREVPLLEMLCSSTGIGAPATYTNPANEFFEETSFGEQFSPEMKQFFMRKYFESVRKKAPIQLDDETFHRICNSEIADEEIPLSFELNFFVKLRNGRVKLYLGPNVGSTRAGKTFGRFSHMSDSISEIIKTLHNKEKELTECNTKVCELSIVPNQTRSGNVTRNVSYREKEMSLFTNSALHLNDSVKAEDILIGINKDHNFYARHKTTGEILSFESNHMFNPLLMTNAVRFLLEISRDGKRKWNDFPWFSIYSDFKYIPEIKYKEITLSCEQWLIYKNDLSMHSNASLEEIKSPFFEFHRTYELPQTFYIVNADNRLLIDIENDCTLDVFFWELKKTNHNQPLQLVAVEHDADALMDRNQNDYSGEIVVPLLRKQPEKPLYLPVLNAIEGSGSDRIKMPFEDWLFIKLYCKQTREEELIAFEIADFYNQISDQYPVRHFFMRYRDPKPHIRLRFNGKAEVLYSLFPQLLNWLKSLREKGLVSESVITQYEREIERYGGLSLMEAAEQLFCEDSKVVEMMIRMHRMKDITISKEIAGMVSVIQFLEQFELTFEEQLTFLERNSLQNEYRTEFKKDREMYIEICNSDRDWDNLKKTSDGGMLYETLKTRKMAAAHYAFLIKKAFDNKDEVYSRIGSIIHLHCNRLFGTDRELENKILTLCRHSLYAQRYQKMNGSLAWK.

To S.epidermidis EpiB and L.lactis NisB.

It localises to the cell membrane. Functionally, involved in the post-translational modification of the lantibiotic subtilin. The sequence is that of Subtilin biosynthesis protein SpaB (spaB) from Bacillus subtilis.